Reading from the N-terminus, the 317-residue chain is Melanocyte-stimulating hormone receptor (317 aa).

At 1–37 (MPVQGSQRRLLGSLNSTPTATPRLGLAANQTGARCLE) the chain is on the extracellular side. Asparagine 29 is a glycosylation site (N-linked (GlcNAc...) asparagine). A helical transmembrane segment spans residues 38–63 (VSIPDGLFLSLGLVSLVENVLVVVAI). Residues 64–72 (ARNRNLHSP) lie on the Cytoplasmic side of the membrane. A helical membrane pass occupies residues 73 to 93 (MYCFICCLALSDLLVSGSNML). The Extracellular portion of the chain corresponds to 94–118 (DTAVILLLEAGALAARAAVVQQLDN). A helical membrane pass occupies residues 119-140 (VIDVITCSSMLSSLCFLGAIAV). Residues 141 to 163 (DRYISIFYALRYHSIVTLRRARR) lie on the Cytoplasmic side of the membrane. Residues 164–183 (VVAAIWVASILFSTLFIAYC) form a helical membrane-spanning segment. Residues 184–191 (DHAAVLLC) lie on the Extracellular side of the membrane. Residues 192-211 (LVVFFLAMLVLMAVLYVHML) traverse the membrane as a helical segment. At 212–240 (ARACQHAQGIAQLHKRQRPAHQGVGLKGA) the chain is on the cytoplasmic side. Residues 241-266 (ATLTILLGIFFLCWGPFFLHLTLIVL) form a helical membrane-spanning segment. Topologically, residues 267–279 (CPQHPTCSCIFKN) are extracellular. Residues 280–300 (FNLFLTLIICNAIIDPLIYAF) traverse the membrane as a helical segment. The Cytoplasmic segment spans residues 301 to 317 (RSQELRRTLKKVLLCSW). Cysteine 315 carries S-palmitoyl cysteine lipidation.

The protein belongs to the G-protein coupled receptor 1 family. In terms of assembly, interacts with MGRN1, but does not undergo MGRN1-mediated ubiquitination; this interaction competes with GNAS-binding and thus inhibits agonist-induced cAMP production. Interacts with OPN3; the interaction results in a decrease in MC1R-mediated cAMP signaling and ultimately a decrease in melanin production in melanocytes.

The protein localises to the cell membrane. Functionally, receptor for MSH (alpha, beta and gamma) and ACTH. The activity of this receptor is mediated by G proteins which activate adenylate cyclase. Mediates melanogenesis, the production of eumelanin (black/brown) and phaeomelanin (red/yellow), via regulation of cAMP signaling in melanocytes. The sequence is that of Melanocyte-stimulating hormone receptor (MC1R) from Trachypithecus francoisi (Francois' leaf monkey).